The sequence spans 475 residues: Glycogen synthase (475 aa).

ADP-alpha-D-glucose is bound at residue Lys15.

It belongs to the glycosyltransferase 1 family. Bacterial/plant glycogen synthase subfamily.

It catalyses the reaction [(1-&gt;4)-alpha-D-glucosyl](n) + ADP-alpha-D-glucose = [(1-&gt;4)-alpha-D-glucosyl](n+1) + ADP + H(+). It functions in the pathway glycan biosynthesis; glycogen biosynthesis. In terms of biological role, synthesizes alpha-1,4-glucan chains using ADP-glucose. The protein is Glycogen synthase of Chlamydia caviae (strain ATCC VR-813 / DSM 19441 / 03DC25 / GPIC) (Chlamydophila caviae).